The following is a 117-amino-acid chain: MRQRVACCWVLLLLAATFCQPAAAKGGRGGSRGAARGMARGAARSRHRGLPRYGGALRVAAAAAAAGAAAGAALHQARAETEYHEGNGTAWTSVAPGWVEWGWAMPWLCPLAAILHH.

The signal sequence occupies residues 1-24; that stretch reads MRQRVACCWVLLLLAATFCQPAAA. Asn87 is a glycosylation site (N-linked (GlcNAc...) asparagine). Ala104 carries GPI-anchor amidated alanine lipidation. A propeptide spans 105-117 (removed in mature form); sequence MPWLCPLAAILHH.

This sequence belongs to the SPRN family.

It is found in the cell membrane. Functionally, prion-like protein that has PrP(C)-like neuroprotective activity. This is Shadow of prion protein (SPRN) from Gallus gallus (Chicken).